We begin with the raw amino-acid sequence, 460 residues long: tRNA modification GTPase MnmE (460 aa).

3 residues coordinate (6S)-5-formyl-5,6,7,8-tetrahydrofolate: R26, E88, and R127. Positions 222-381 (GLKVAIVGRP…LESAILSKVQ (160 aa)) constitute a TrmE-type G domain. N232 serves as a coordination point for K(+). GTP-binding positions include 232–237 (NVGKSS), 251–257 (TELPGTT), and 276–279 (DTAG). S236 serves as a coordination point for Mg(2+). 3 residues coordinate K(+): T251, L253, and T256. Residue T257 participates in Mg(2+) binding. K460 lines the (6S)-5-formyl-5,6,7,8-tetrahydrofolate pocket.

This sequence belongs to the TRAFAC class TrmE-Era-EngA-EngB-Septin-like GTPase superfamily. TrmE GTPase family. Homodimer. Heterotetramer of two MnmE and two MnmG subunits. K(+) is required as a cofactor.

It is found in the cytoplasm. In terms of biological role, exhibits a very high intrinsic GTPase hydrolysis rate. Involved in the addition of a carboxymethylaminomethyl (cmnm) group at the wobble position (U34) of certain tRNAs, forming tRNA-cmnm(5)s(2)U34. The sequence is that of tRNA modification GTPase MnmE from Cyanothece sp. (strain PCC 7425 / ATCC 29141).